Consider the following 81-residue polypeptide: MASEQEILSGLAEIVNEETGLPTDSVLADKSFTDDLDIDSLSMMTIVVNAEEKFSVRIPDEDVKNLRTVGDAVAYISQAQG.

A Carrier domain is found at alanine 2 to glutamine 80. The residue at position 40 (serine 40) is an O-(pantetheine 4'-phosphoryl)serine.

It belongs to the acyl carrier protein (ACP) family. Post-translationally, 4'-phosphopantetheine is transferred from CoA to a specific serine of apo-ACP by AcpS. This modification is essential for activity because fatty acids are bound in thioester linkage to the sulfhydryl of the prosthetic group.

It localises to the cytoplasm. It participates in lipid metabolism; fatty acid biosynthesis. Functionally, carrier of the growing fatty acid chain in fatty acid biosynthesis. This Kineococcus radiotolerans (strain ATCC BAA-149 / DSM 14245 / SRS30216) protein is Acyl carrier protein.